The chain runs to 193 residues: dTTP/UTP pyrophosphatase (193 aa).

D77 acts as the Proton acceptor in catalysis.

The protein belongs to the Maf family. YhdE subfamily. Requires a divalent metal cation as cofactor.

It is found in the cytoplasm. The enzyme catalyses dTTP + H2O = dTMP + diphosphate + H(+). It catalyses the reaction UTP + H2O = UMP + diphosphate + H(+). Its function is as follows. Nucleoside triphosphate pyrophosphatase that hydrolyzes dTTP and UTP. May have a dual role in cell division arrest and in preventing the incorporation of modified nucleotides into cellular nucleic acids. In Bacteroides fragilis (strain ATCC 25285 / DSM 2151 / CCUG 4856 / JCM 11019 / LMG 10263 / NCTC 9343 / Onslow / VPI 2553 / EN-2), this protein is dTTP/UTP pyrophosphatase.